Consider the following 117-residue polypeptide: Cuticle protein CP1243 (117 aa).

Repeat copies occupy residues 1–17, 26–43, 67–84, and 93–110.

As to expression, calcified shell.

This is Cuticle protein CP1243 from Cancer pagurus (Rock crab).